A 483-amino-acid polypeptide reads, in one-letter code: Regulatory protein ViaA (483 aa).

Belongs to the ViaA family. In terms of assembly, homodimer. Interacts with RavA.

The protein resides in the cytoplasm. Its function is as follows. Component of the RavA-ViaA chaperone complex, which may act on the membrane to optimize the function of some of the respiratory chains. ViaA stimulates the ATPase activity of RavA. The sequence is that of Regulatory protein ViaA from Escherichia coli O127:H6 (strain E2348/69 / EPEC).